The chain runs to 348 residues: Erythronate-4-phosphate dehydrogenase (348 aa).

Residues Thr-46 and Thr-67 each coordinate substrate. Asp-147 is a binding site for NAD(+). Arg-209 is an active-site residue. Position 233 (Asp-233) interacts with NAD(+). The active site involves Glu-238. His-255 acts as the Proton donor in catalysis. Gly-258 lines the NAD(+) pocket. Tyr-259 contributes to the substrate binding site.

The protein belongs to the D-isomer specific 2-hydroxyacid dehydrogenase family. PdxB subfamily. Homodimer.

The protein localises to the cytoplasm. It carries out the reaction 4-phospho-D-erythronate + NAD(+) = (R)-3-hydroxy-2-oxo-4-phosphooxybutanoate + NADH + H(+). Its pathway is cofactor biosynthesis; pyridoxine 5'-phosphate biosynthesis; pyridoxine 5'-phosphate from D-erythrose 4-phosphate: step 2/5. In terms of biological role, catalyzes the oxidation of erythronate-4-phosphate to 3-hydroxy-2-oxo-4-phosphonooxybutanoate. This is Erythronate-4-phosphate dehydrogenase from Bacteroides fragilis (strain YCH46).